Consider the following 311-residue polypeptide: L-lactate dehydrogenase 2 (311 aa).

3 residues coordinate NAD(+): Val-14, Asp-35, and Arg-40. Arg-90 provides a ligand contact to substrate. Residues Ser-103, 120-122 (ATN), and Thr-145 each bind NAD(+). Substrate is bound at residue 122 to 125 (NPCD). 150-153 (DTTR) lines the substrate pocket. His-177 (proton acceptor) is an active-site residue. Substrate is bound at residue Thr-230.

This sequence belongs to the LDH/MDH superfamily. LDH family. As to quaternary structure, homotetramer.

It is found in the cytoplasm. The catalysed reaction is (S)-lactate + NAD(+) = pyruvate + NADH + H(+). Its pathway is fermentation; pyruvate fermentation to lactate; (S)-lactate from pyruvate: step 1/1. In terms of biological role, catalyzes the conversion of lactate to pyruvate. The protein is L-lactate dehydrogenase 2 of Listeria monocytogenes serotype 4b (strain F2365).